Here is a 302-residue protein sequence, read N- to C-terminus: MANRATSAFLDNPHPVGVNYVDEGSRQFVAVAELLASKLIASSRESDESNSDVPFVQAYSKFADDNPRHLRVKTGGKMANALTNVIRSYYSINAPAIVPQVEIDRLASKATVSGDMYNSYAVFNSVPIVEVLSPAQTTVSIVGSDRADVTMLNTGAGAANITFNFGQIAETVILKGSVPFQLARANQPMPAARFTYKLRPLDGPFIVVLPVGNPLVISATAATRIQVPLAFNKALVESGFQTAMNDGLFDAQNVNYYSSFDEFIIAQYHALDGINRVSTCVVLGLALQAYDQMRRALPVRRV.

Its subcellular location is the virion. Its function is as follows. Self assembles to form an icosahedral capsid with a T=13 symmetry, which consists of 230 trimers, with channels at each of its five-fold vertices. The sequence is that of Intermediate capsid protein VP8 (Segment-8) from Banna virus (BAV).